A 407-amino-acid chain; its full sequence is Heparan-sulfate 6-O-sulfotransferase 1-B (407 aa).

Topologically, residues methionine 8–lysine 14 are cytoplasmic. Residues phenylalanine 15–proline 35 traverse the membrane as a helical; Signal-anchor for type II membrane protein segment. Over glycine 36 to tryptophan 407 the chain is Lumenal. Residue histidine 92–threonine 100 participates in 3'-phosphoadenylyl sulfate binding. Residues lysine 122–lysine 123, arginine 139, tryptophan 144, and histidine 149 contribute to the substrate site. Histidine 149 functions as the Proton acceptor in the catalytic mechanism. Arginine 183 and serine 191 together coordinate 3'-phosphoadenylyl sulfate. Positions 195 and 202 each coordinate substrate. Asparagine 262 is a glycosylation site (N-linked (GlcNAc...) asparagine). Methionine 315–tyrosine 317 serves as a coordination point for 3'-phosphoadenylyl sulfate. N-linked (GlcNAc...) asparagine glycosylation occurs at asparagine 318. Arginine 321–alanine 322 lines the 3'-phosphoadenylyl sulfate pocket. Asparagine 329 is a glycosylation site (N-linked (GlcNAc...) asparagine).

It belongs to the sulfotransferase 6 family. As to expression, during early somitogenesis, first expressed in floor plate and somites. During mid-somitogenesis, expressed strongly in somites and more weakly in eye and hindbrain. During late somitogenesis, expressed in eye, hindbrain and posterior somites. At 24 hours post-fertilization (hpf), expressed in lens, forebrain, hindbrain, otic vesicle, anterior spinal cord neurons and posterior somites. At 36 hpf, expressed in the retinal ciliary marginal zone, brain, pancreas and weakly in pectoral fin. At 48 hpf, expressed in the retinal ciliary marginal zone, retinal ganglion cells, rhombomeres, otic vesicle and weakly in pectoral fin.

The protein resides in the membrane. It catalyses the reaction alpha-D-glucosaminyl-[heparan sulfate](n) + 3'-phosphoadenylyl sulfate = 6-sulfo-alpha-D-glucosaminyl-[heparan sulfate](n) + adenosine 3',5'-bisphosphate + H(+). 6-O-sulfation enzyme which catalyzes the transfer of sulfate from 3'-phosphoadenosine 5'-phosphosulfate (PAPS) to position 6 of the N-sulfoglucosamine residue (GlcNS) of heparan sulfate. The protein is Heparan-sulfate 6-O-sulfotransferase 1-B of Danio rerio (Zebrafish).